The following is a 171-amino-acid chain: 6,7-dimethyl-8-ribityllumazine synthase (171 aa).

Residues Phe-24, 58–60, and 82–84 each bind 5-amino-6-(D-ribitylamino)uracil; these read ALE and AVI. 87-88 is a binding site for (2S)-2-hydroxy-3-oxobutyl phosphate; that stretch reads ET. His-90 serves as the catalytic Proton donor. 5-amino-6-(D-ribitylamino)uracil is bound at residue Asn-115. Arg-129 provides a ligand contact to (2S)-2-hydroxy-3-oxobutyl phosphate. The interval 150 to 171 is disordered; that stretch reads ALDQLGDDEDEEEDEEDEEERA. A compositionally biased stretch (acidic residues) spans 154 to 171; sequence LGDDEDEEEDEEDEEERA.

The protein belongs to the DMRL synthase family.

The enzyme catalyses (2S)-2-hydroxy-3-oxobutyl phosphate + 5-amino-6-(D-ribitylamino)uracil = 6,7-dimethyl-8-(1-D-ribityl)lumazine + phosphate + 2 H2O + H(+). It participates in cofactor biosynthesis; riboflavin biosynthesis; riboflavin from 2-hydroxy-3-oxobutyl phosphate and 5-amino-6-(D-ribitylamino)uracil: step 1/2. Its function is as follows. Catalyzes the formation of 6,7-dimethyl-8-ribityllumazine by condensation of 5-amino-6-(D-ribitylamino)uracil with 3,4-dihydroxy-2-butanone 4-phosphate. This is the penultimate step in the biosynthesis of riboflavin. In Burkholderia ambifaria (strain ATCC BAA-244 / DSM 16087 / CCUG 44356 / LMG 19182 / AMMD) (Burkholderia cepacia (strain AMMD)), this protein is 6,7-dimethyl-8-ribityllumazine synthase.